Reading from the N-terminus, the 107-residue chain is uncharacterized protein (107 aa).

Residues Lys6–Ala107 form the Glutaredoxin domain. Residue Lys23 coordinates glutathione. Cys31 lines the [2Fe-2S] cluster pocket. Glutathione is bound by residues Arg60 and Ala85–Asp86.

This sequence belongs to the glutaredoxin family. Monothiol subfamily.

It is found in the plastid. It localises to the chloroplast. This is an uncharacterized protein from Porphyra purpurea (Red seaweed).